A 229-amino-acid chain; its full sequence is UPF0758 protein CLL_A0562 (229 aa).

An MPN domain is found at lysine 107–isoleucine 229. Residues histidine 178, histidine 180, and aspartate 191 each contribute to the Zn(2+) site. The JAMM motif motif lies at histidine 178 to aspartate 191.

It belongs to the UPF0758 family.

The protein is UPF0758 protein CLL_A0562 of Clostridium botulinum (strain Eklund 17B / Type B).